Here is a 37-residue protein sequence, read N- to C-terminus: Large ribosomal subunit protein bL36c (37 aa).

Belongs to the bacterial ribosomal protein bL36 family.

Its subcellular location is the plastid. It localises to the chloroplast. This Thalassiosira pseudonana (Marine diatom) protein is Large ribosomal subunit protein bL36c.